The primary structure comprises 834 residues: Leucine--tRNA ligase (834 aa).

The short motif at 36–46 (PYPSGKIHVGH) is the 'HIGH' region element. Residues 602–606 (KMSKS) carry the 'KMSKS' region motif. Residue Lys605 coordinates ATP.

This sequence belongs to the class-I aminoacyl-tRNA synthetase family.

It localises to the cytoplasm. It carries out the reaction tRNA(Leu) + L-leucine + ATP = L-leucyl-tRNA(Leu) + AMP + diphosphate. The polypeptide is Leucine--tRNA ligase (Rickettsia canadensis (strain McKiel)).